The primary structure comprises 335 residues: DNA polymerase beta (335 aa).

A Glycyl lysine isopeptide (Lys-Gly) (interchain with G-Cter in ubiquitin) cross-link involves residue Lys41. Lys60 contributes to the K(+) binding site. Lys60 lines the Na(+) pocket. Lys61 is covalently cross-linked (Glycyl lysine isopeptide (Lys-Gly) (interchain with G-Cter in ubiquitin)). K(+) is bound by residues Leu62 and Val65. Positions 62 and 65 each coordinate Na(+). Lys72 serves as the catalytic Nucleophile; Schiff-base intermediate with DNA; for 5'-dRP lyase activity. Lys72 is subject to N6-acetyllysine. Lys81 participates in a covalent cross-link: Glycyl lysine isopeptide (Lys-Gly) (interchain with G-Cter in ubiquitin). An Omega-N-methylarginine; by PRMT6 modification is found at Arg83. Positions 101, 103, and 106 each coordinate K(+). The Na(+) site is built by Thr101, Val103, and Ile106. Residue Arg149 participates in a 2'-deoxyribonucleoside 5'-triphosphate binding. Omega-N-methylarginine; by PRMT6 is present on Arg152. Residues Ser180, Arg183, Gly189, and Asp190 each coordinate a 2'-deoxyribonucleoside 5'-triphosphate. Positions Arg183–Asp192 are DNA-binding. The Mg(2+) site is built by Asp190, Asp192, and Asp256.

It belongs to the DNA polymerase type-X family. In terms of assembly, monomer. Binds single-stranded DNA (ssDNA). Interacts with APEX1, LIG1, LIG3, FEN1, PCNA and XRCC1. Interacts with HUWE1/ARF-BP1, STUB1/CHIP and USP47. Interacts with FAM168A. The cofactor is Mg(2+). In terms of processing, methylation by PRMT6 stimulates the polymerase activity by enhancing DNA binding and processivity. Post-translationally, ubiquitinated at Lys-41, Lys-61 and Lys-81: monoubiquitinated by HUWE1/ARF-BP1. Monoubiquitinated protein is then the target of STUB1/CHIP, which catalyzes polyubiquitination from monoubiquitin, leading to degradation by the proteasome. USP47 mediates the deubiquitination of monoubiquitinated protein, preventing polyubiquitination by STUB1/CHIP and its subsequent degradation.

It is found in the nucleus. The protein localises to the cytoplasm. The enzyme catalyses DNA(n) + a 2'-deoxyribonucleoside 5'-triphosphate = DNA(n+1) + diphosphate. The catalysed reaction is a 5'-end 2'-deoxyribose-2'-deoxyribonucleotide-DNA = (2E,4S)-4-hydroxypenten-2-al-5-phosphate + a 5'-end 5'-phospho-2'-deoxyribonucleoside-DNA + H(+). It carries out the reaction 2'-deoxyribonucleotide-(2'-deoxyribose 5'-phosphate)-2'-deoxyribonucleotide-DNA = a 3'-end 2'-deoxyribonucleotide-(2,3-dehydro-2,3-deoxyribose 5'-phosphate)-DNA + a 5'-end 5'-phospho-2'-deoxyribonucleoside-DNA + H(+). Its function is as follows. Repair polymerase that plays a key role in base-excision repair. During this process, the damaged base is excised by specific DNA glycosylases, the DNA backbone is nicked at the abasic site by an apurinic/apyrimidic (AP) endonuclease, and POLB removes 5'-deoxyribose-phosphate from the preincised AP site acting as a 5'-deoxyribose-phosphate lyase (5'-dRP lyase); through its DNA polymerase activity, it adds one nucleotide to the 3' end of the arising single-nucleotide gap. Conducts 'gap-filling' DNA synthesis in a stepwise distributive fashion rather than in a processive fashion as for other DNA polymerases. It is also able to cleave sugar-phosphate bonds 3' to an intact AP site, acting as an AP lyase. This Mus musculus (Mouse) protein is DNA polymerase beta (Polb).